The primary structure comprises 101 residues: Protein RnfH (101 aa).

It belongs to the UPF0125 (RnfH) family.

The chain is Protein RnfH from Coxiella burnetii (strain CbuK_Q154) (Coxiella burnetii (strain Q154)).